Reading from the N-terminus, the 179-residue chain is Peptidyl-tRNA hydrolase (179 aa).

Residue Tyr-15 participates in tRNA binding. The active-site Proton acceptor is His-20. TRNA is bound by residues Tyr-66, Asn-68, and Asn-114.

The protein belongs to the PTH family. In terms of assembly, monomer.

The protein resides in the cytoplasm. It catalyses the reaction an N-acyl-L-alpha-aminoacyl-tRNA + H2O = an N-acyl-L-amino acid + a tRNA + H(+). In terms of biological role, hydrolyzes ribosome-free peptidyl-tRNAs (with 1 or more amino acids incorporated), which drop off the ribosome during protein synthesis, or as a result of ribosome stalling. Its function is as follows. Catalyzes the release of premature peptidyl moieties from peptidyl-tRNA molecules trapped in stalled 50S ribosomal subunits, and thus maintains levels of free tRNAs and 50S ribosomes. The chain is Peptidyl-tRNA hydrolase from Chlamydia muridarum (strain MoPn / Nigg).